The following is a 261-amino-acid chain: Cytochrome c oxidase subunit 3 (261 aa).

Residues 1 to 15 (MAHQAHAYHMVDPSP) lie on the Mitochondrial matrix side of the membrane. The helical transmembrane segment at 16–34 (WPITGATAALLVTSGLAAW) threads the bilayer. Residues 35-40 (FHFNSM) are Mitochondrial intermembrane-facing. Residues 41–66 (ILILMGLTLLLLTMYQWWRDIIREST) traverse the membrane as a helical segment. Over 67 to 72 (FQGHHT) the chain is Mitochondrial matrix. The helical transmembrane segment at 73-105 (LPVQKSLRYGMILFITSEVFFFLGFFWAFYHSS) threads the bilayer. The Mitochondrial intermembrane portion of the chain corresponds to 106-128 (LAPTPELGGLWPPTGITPLDPFE). A helical membrane pass occupies residues 129–152 (VPLLNTAVLLASGITVTWAHHSLM). The Mitochondrial matrix portion of the chain corresponds to 153 to 155 (EGQ). Residues 156 to 183 (RKEAIQSLFITVLLGLYFTALQATEYYE) traverse the membrane as a helical segment. Topologically, residues 184–190 (SPFTIAD) are mitochondrial intermembrane. Residues 191–223 (GAYGSTFFVATGFHGLHVIIGSTFLIVCLVRQT) traverse the membrane as a helical segment. At 224 to 232 (QYHFTSNHH) the chain is on the mitochondrial matrix side. A helical membrane pass occupies residues 233–256 (FGFEAAAWYWHFVDVVWLFLYVSI). At 257 to 261 (YWWGS) the chain is on the mitochondrial intermembrane side.

Belongs to the cytochrome c oxidase subunit 3 family. In terms of assembly, component of the cytochrome c oxidase (complex IV, CIV), a multisubunit enzyme composed of 14 subunits. The complex is composed of a catalytic core of 3 subunits MT-CO1, MT-CO2 and MT-CO3, encoded in the mitochondrial DNA, and 11 supernumerary subunits COX4I, COX5A, COX5B, COX6A, COX6B, COX6C, COX7A, COX7B, COX7C, COX8 and NDUFA4, which are encoded in the nuclear genome. The complex exists as a monomer or a dimer and forms supercomplexes (SCs) in the inner mitochondrial membrane with NADH-ubiquinone oxidoreductase (complex I, CI) and ubiquinol-cytochrome c oxidoreductase (cytochrome b-c1 complex, complex III, CIII), resulting in different assemblies (supercomplex SCI(1)III(2)IV(1) and megacomplex MCI(2)III(2)IV(2)).

The protein localises to the mitochondrion inner membrane. The catalysed reaction is 4 Fe(II)-[cytochrome c] + O2 + 8 H(+)(in) = 4 Fe(III)-[cytochrome c] + 2 H2O + 4 H(+)(out). Functionally, component of the cytochrome c oxidase, the last enzyme in the mitochondrial electron transport chain which drives oxidative phosphorylation. The respiratory chain contains 3 multisubunit complexes succinate dehydrogenase (complex II, CII), ubiquinol-cytochrome c oxidoreductase (cytochrome b-c1 complex, complex III, CIII) and cytochrome c oxidase (complex IV, CIV), that cooperate to transfer electrons derived from NADH and succinate to molecular oxygen, creating an electrochemical gradient over the inner membrane that drives transmembrane transport and the ATP synthase. Cytochrome c oxidase is the component of the respiratory chain that catalyzes the reduction of oxygen to water. Electrons originating from reduced cytochrome c in the intermembrane space (IMS) are transferred via the dinuclear copper A center (CU(A)) of subunit 2 and heme A of subunit 1 to the active site in subunit 1, a binuclear center (BNC) formed by heme A3 and copper B (CU(B)). The BNC reduces molecular oxygen to 2 water molecules using 4 electrons from cytochrome c in the IMS and 4 protons from the mitochondrial matrix. The sequence is that of Cytochrome c oxidase subunit 3 (MT-CO3) from Latimeria chalumnae (Coelacanth).